The sequence spans 80 residues: Conotoxin Cl9.5 (80 aa).

A signal peptide spans 1 to 23 (MNCYLILTVALLLTSAMTGTTTA). Residues 24 to 37 (GQLNTKGVTLREDD) constitute a propeptide that is removed on maturation. 3 disulfides stabilise this stretch: C42/C59, C47/C69, and C49/C74.

As to expression, expressed by the venom duct.

Its subcellular location is the secreted. This Californiconus californicus (California cone) protein is Conotoxin Cl9.5.